Consider the following 305-residue polypeptide: Pseudouridine-5'-phosphate glycosidase (305 aa).

The active-site Proton donor is Glu-28. Lys-89 and Val-109 together coordinate substrate. A Mn(2+)-binding site is contributed by Asp-141. 143 to 145 (SAD) is a binding site for substrate. The active-site Nucleophile is the Lys-162.

It belongs to the pseudouridine-5'-phosphate glycosidase family. As to quaternary structure, homotrimer. It depends on Mn(2+) as a cofactor.

The catalysed reaction is D-ribose 5-phosphate + uracil = psi-UMP + H2O. Catalyzes the reversible cleavage of pseudouridine 5'-phosphate (PsiMP) to ribose 5-phosphate and uracil. Functions biologically in the cleavage direction, as part of a pseudouridine degradation pathway. The polypeptide is Pseudouridine-5'-phosphate glycosidase (Dinoroseobacter shibae (strain DSM 16493 / NCIMB 14021 / DFL 12)).